Reading from the N-terminus, the 367-residue chain is Alanine racemase (367 aa).

Catalysis depends on K40, which acts as the Proton acceptor; specific for D-alanine. The residue at position 40 (K40) is an N6-(pyridoxal phosphate)lysine. R136 contacts substrate. Y263 acts as the Proton acceptor; specific for L-alanine in catalysis. Residue M310 coordinates substrate.

The protein belongs to the alanine racemase family. Requires pyridoxal 5'-phosphate as cofactor.

It carries out the reaction L-alanine = D-alanine. The protein operates within amino-acid biosynthesis; D-alanine biosynthesis; D-alanine from L-alanine: step 1/1. Functionally, catalyzes the interconversion of L-alanine and D-alanine. May also act on other amino acids. This is Alanine racemase (alr) from Lactococcus lactis subsp. cremoris (strain MG1363).